We begin with the raw amino-acid sequence, 141 residues long: Large ribosomal subunit protein uL11 (141 aa).

It belongs to the universal ribosomal protein uL11 family. Part of the ribosomal stalk of the 50S ribosomal subunit. Interacts with L10 and the large rRNA to form the base of the stalk. L10 forms an elongated spine to which L12 dimers bind in a sequential fashion forming a multimeric L10(L12)X complex. In terms of processing, one or more lysine residues are methylated.

Forms part of the ribosomal stalk which helps the ribosome interact with GTP-bound translation factors. The chain is Large ribosomal subunit protein uL11 from Streptococcus suis (strain 05ZYH33).